The following is a 285-amino-acid chain: N(G),N(G)-dimethylarginine dimethylaminohydrolase 1 (285 aa).

Ala2 carries the N-acetylalanine modification. 6 residues coordinate substrate: Leu30, Asp73, Glu78, Asp79, Arg98, and Arg145. His173 acts as the Proton donor in catalysis. At Cys222 the chain carries S-nitrosocysteine. A substrate-binding site is contributed by Val268. Cys274 is subject to S-nitrosocysteine. Cys274 functions as the Nucleophile in the catalytic mechanism. Cys274 contacts Zn(2+).

In terms of assembly, monomer. As to expression, widely distributed, highest concentrations found in brain, brain cortex and kidney (at protein level).

The enzyme catalyses N(omega),N(omega)-dimethyl-L-arginine + H2O = dimethylamine + L-citrulline. It carries out the reaction N(omega)-methyl-L-arginine + H2O = L-citrulline + methylamine. Copurifies with a tightly bound zinc ion. Activated by release of zinc. His and other agents that promote the release of bound zinc ions activate the enzyme (in vitro). Inhibited by S-nitrosylation. Zinc protects the protein against S-nitrosylation. Its function is as follows. Hydrolyzes N(G),N(G)-dimethyl-L-arginine (ADMA) and N(G)-monomethyl-L-arginine (MMA) which act as inhibitors of NOS. Has therefore a role in the regulation of nitric oxide generation. This chain is N(G),N(G)-dimethylarginine dimethylaminohydrolase 1 (DDAH1), found in Bos taurus (Bovine).